The chain runs to 278 residues: Large ribosomal subunit protein uL2 (278 aa).

Residues 202-278 (ANINDGKAGR…IMRSRHQRKK (77 aa)) form a disordered region.

This sequence belongs to the universal ribosomal protein uL2 family. In terms of assembly, part of the 50S ribosomal subunit. Forms a bridge to the 30S subunit in the 70S ribosome.

In terms of biological role, one of the primary rRNA binding proteins. Required for association of the 30S and 50S subunits to form the 70S ribosome, for tRNA binding and peptide bond formation. It has been suggested to have peptidyltransferase activity; this is somewhat controversial. Makes several contacts with the 16S rRNA in the 70S ribosome. This chain is Large ribosomal subunit protein uL2, found in Rhizobium johnstonii (strain DSM 114642 / LMG 32736 / 3841) (Rhizobium leguminosarum bv. viciae).